Reading from the N-terminus, the 202-residue chain is B-cell CLL/lymphoma 7 protein family member B (202 aa).

Residues 53–202 (DSKEKEKSKS…PVVPQTTSES (150 aa)) form a disordered region. Over residues 90–99 (ENSNQSSVSD) the composition is skewed to polar residues. Residues 107–123 (SSTNSSPSPQQSESLSP) are compositionally biased toward low complexity. Phosphoserine occurs at positions 114, 118, 120, 122, 127, 148, and 152.

The protein belongs to the BCL7 family.

In terms of biological role, positive regulator of apoptosis. Plays a role in the Wnt signaling pathway, negatively regulating the expression of Wnt signaling components CTNNB1 and HMGA1. Involved in cell cycle progression, maintenance of the nuclear structure and stem cell differentiation. May play a role in lung tumor development or progression. This Mus musculus (Mouse) protein is B-cell CLL/lymphoma 7 protein family member B (Bcl7b).